Reading from the N-terminus, the 219-residue chain is Thymidylate kinase (219 aa).

7-14 (GIDGAGKS) provides a ligand contact to ATP.

The protein belongs to the thymidylate kinase family.

It catalyses the reaction dTMP + ATP = dTDP + ADP. Its function is as follows. Phosphorylation of dTMP to form dTDP in both de novo and salvage pathways of dTTP synthesis. The protein is Thymidylate kinase of Chlorobium limicola (strain DSM 245 / NBRC 103803 / 6330).